A 217-amino-acid polypeptide reads, in one-letter code: Putative thymidylate synthase (217 aa).

Cysteine 139 is an active-site residue.

This sequence belongs to the thymidylate synthase family. Archaeal-type ThyA subfamily. In terms of assembly, monomer.

The protein localises to the cytoplasm. It participates in pyrimidine metabolism; dTTP biosynthesis. Functionally, may catalyze the biosynthesis of dTMP using an unknown cosubstrate. This chain is Putative thymidylate synthase, found in Methanococcoides burtonii (strain DSM 6242 / NBRC 107633 / OCM 468 / ACE-M).